We begin with the raw amino-acid sequence, 172 residues long: RNA pyrophosphohydrolase (172 aa).

One can recognise a Nudix hydrolase domain in the interval 6–149 (GYRPNVGIIL…KRDVYRMALK (144 aa)). The Nudix box motif lies at 38–59 (GGIKYGESPEQAMYRELMEEVG).

It belongs to the Nudix hydrolase family. RppH subfamily. Requires a divalent metal cation as cofactor.

Its function is as follows. Accelerates the degradation of transcripts by removing pyrophosphate from the 5'-end of triphosphorylated RNA, leading to a more labile monophosphorylated state that can stimulate subsequent ribonuclease cleavage. In Methylobacillus flagellatus (strain ATCC 51484 / DSM 6875 / VKM B-1610 / KT), this protein is RNA pyrophosphohydrolase.